The chain runs to 1368 residues: DNA-directed RNA polymerase subunit beta (1368 aa).

The protein belongs to the RNA polymerase beta chain family. In terms of assembly, the RNAP catalytic core consists of 2 alpha, 1 beta, 1 beta' and 1 omega subunit. When a sigma factor is associated with the core the holoenzyme is formed, which can initiate transcription.

It catalyses the reaction RNA(n) + a ribonucleoside 5'-triphosphate = RNA(n+1) + diphosphate. Functionally, DNA-dependent RNA polymerase catalyzes the transcription of DNA into RNA using the four ribonucleoside triphosphates as substrates. The sequence is that of DNA-directed RNA polymerase subunit beta from Janthinobacterium sp. (strain Marseille) (Minibacterium massiliensis).